The chain runs to 275 residues: Diaminopimelate epimerase (275 aa).

N13, Q46, and N66 together coordinate substrate. The active-site Proton donor is the C75. Substrate-binding positions include 76-77 (GN), N159, N192, and 210-211 (ER). The active-site Proton acceptor is C219. Residue 220–221 (GS) coordinates substrate.

The protein belongs to the diaminopimelate epimerase family. In terms of assembly, homodimer.

The protein resides in the cytoplasm. It catalyses the reaction (2S,6S)-2,6-diaminopimelate = meso-2,6-diaminopimelate. The protein operates within amino-acid biosynthesis; L-lysine biosynthesis via DAP pathway; DL-2,6-diaminopimelate from LL-2,6-diaminopimelate: step 1/1. Its function is as follows. Catalyzes the stereoinversion of LL-2,6-diaminopimelate (L,L-DAP) to meso-diaminopimelate (meso-DAP), a precursor of L-lysine and an essential component of the bacterial peptidoglycan. This chain is Diaminopimelate epimerase, found in Idiomarina loihiensis (strain ATCC BAA-735 / DSM 15497 / L2-TR).